The chain runs to 476 residues: MKDTFVEKVDDFVRQHDVLKERSTIVVGVSGGPDSLALLYYLLEKRAAKQFEIVVAHVDHMFRGDESHEDLQFVQDLCKGLGVICETIRINVSQYQKQYGMNAQVAARECRYAFLERIMKKYDARYVALGHHGDDQVETILMRLVRGSTPKGYAGIAVKRPFHNGYLIRPLLGVTKEEIVNYCNELKIIPRIDPSNKKEVYTRNRLRKYVLPHLKEENPQVHEKFQKFSMQMQEDEAYLQELAFEKMNKVITKKSDKQISLSIPAFESMSMPLQRRGIQLILNYLYEYKIPSSLSSIHIDKVIEFFKRTQPSGSLDFPGDLKIVRAYEECSFGFKQEIVSPFLQDLSVPGTITLSNGDKLVTEVSEDIPSDMNETVFVAKYNDISYPIRIRSRENGDRMSIQGMNGTKKIKAIFIEAKVPREKREEWPVVCDASGNIIWLPLLKRSAFAISKETAKKDKYMIIHYKSKESSGRIMK.

30-35 provides a ligand contact to ATP; the sequence is SGGPDS.

This sequence belongs to the tRNA(Ile)-lysidine synthase family.

It localises to the cytoplasm. The enzyme catalyses cytidine(34) in tRNA(Ile2) + L-lysine + ATP = lysidine(34) in tRNA(Ile2) + AMP + diphosphate + H(+). In terms of biological role, ligates lysine onto the cytidine present at position 34 of the AUA codon-specific tRNA(Ile) that contains the anticodon CAU, in an ATP-dependent manner. Cytidine is converted to lysidine, thus changing the amino acid specificity of the tRNA from methionine to isoleucine. The chain is tRNA(Ile)-lysidine synthase from Bacillus thuringiensis subsp. konkukian (strain 97-27).